We begin with the raw amino-acid sequence, 301 residues long: Phosphatidylserine decarboxylase proenzyme (301 aa).

Active-site charge relay system; for autoendoproteolytic cleavage activity residues include Asp-117, His-173, and Ser-260. Ser-260 functions as the Schiff-base intermediate with substrate; via pyruvic acid; for decarboxylase activity in the catalytic mechanism. Ser-260 bears the Pyruvic acid (Ser); by autocatalysis mark.

Belongs to the phosphatidylserine decarboxylase family. PSD-B subfamily. Prokaryotic type II sub-subfamily. Heterodimer of a large membrane-associated beta subunit and a small pyruvoyl-containing alpha subunit. Pyruvate is required as a cofactor. Post-translationally, is synthesized initially as an inactive proenzyme. Formation of the active enzyme involves a self-maturation process in which the active site pyruvoyl group is generated from an internal serine residue via an autocatalytic post-translational modification. Two non-identical subunits are generated from the proenzyme in this reaction, and the pyruvate is formed at the N-terminus of the alpha chain, which is derived from the carboxyl end of the proenzyme. The autoendoproteolytic cleavage occurs by a canonical serine protease mechanism, in which the side chain hydroxyl group of the serine supplies its oxygen atom to form the C-terminus of the beta chain, while the remainder of the serine residue undergoes an oxidative deamination to produce ammonia and the pyruvoyl prosthetic group on the alpha chain. During this reaction, the Ser that is part of the protease active site of the proenzyme becomes the pyruvoyl prosthetic group, which constitutes an essential element of the active site of the mature decarboxylase.

Its subcellular location is the cell membrane. The enzyme catalyses a 1,2-diacyl-sn-glycero-3-phospho-L-serine + H(+) = a 1,2-diacyl-sn-glycero-3-phosphoethanolamine + CO2. It functions in the pathway phospholipid metabolism; phosphatidylethanolamine biosynthesis; phosphatidylethanolamine from CDP-diacylglycerol: step 2/2. Catalyzes the formation of phosphatidylethanolamine (PtdEtn) from phosphatidylserine (PtdSer). The chain is Phosphatidylserine decarboxylase proenzyme from Chlamydia trachomatis serovar L2b (strain UCH-1/proctitis).